Here is a 368-residue protein sequence, read N- to C-terminus: Epoxyqueuosine reductase QueH (368 aa).

[4Fe-4S] cluster is bound by residues C6, C7, C87, and C90. A disulfide bridge links C174 with C176.

Belongs to the QueH family.

The enzyme catalyses epoxyqueuosine(34) in tRNA + AH2 = queuosine(34) in tRNA + A + H2O. It functions in the pathway tRNA modification; tRNA-queuosine biosynthesis. Its function is as follows. Catalyzes the conversion of epoxyqueuosine (oQ) to queuosine (Q), which is a hypermodified base found in the wobble positions of tRNA(Asp), tRNA(Asn), tRNA(His) and tRNA(Tyr). This chain is Epoxyqueuosine reductase QueH, found in Helicobacter pylori (strain ATCC 700392 / 26695) (Campylobacter pylori).